Consider the following 387-residue polypeptide: Zinc finger transcription factor YY1 (387 aa).

5 consecutive C2H2-type zinc fingers follow at residues 79-103 (FLCSYDGCGKTFFDVSALRKHSHIH), 108-132 (YVCDQEGCGKKFLDSSKLKRHYLIH), 138-162 (YICTYEGCGKAFSLDFNLRSHMKTH), 168-193 (HICPYSGCVKRYAHEYKLKNHVAAYH), and 230-255 (YACPYEGCEKAYIHEYKLKLHLKREH). Residues 201–290 (TPKYTPPAEK…DDGSDQDVYR (90 aa)) are MED18-binding. The interval 258 to 387 (HLQEENADTP…DDDEETEYED (130 aa)) is disordered. Ser-284 is subject to Phosphoserine. Residues 291–305 (KHASNGKGQTHKQQS) are compositionally biased toward basic residues. The short motif at 319–326 (GKKGSTSS) is the Nuclear localization signal element. Residues 339-367 (AKETFEEVEREEEEDSEETEEDRDNVEDG) adopt a coiled-coil conformation. 2 stretches are compositionally biased toward acidic residues: residues 344-363 (EEVEREEEEDSEETEEDRDN) and 373-387 (NNEDDDDDEETEYED).

In terms of assembly, interacts with MED18 to suppress disease susceptibility via the repression of genes glutaredoxins GRX480, GRXS13 and thioredoxin TRX-h5. As to expression, mostly expressed in flowers, to a lower extent in seedlings, stems and leaves, and, at low levels, in roots and senescent leaves.

Its subcellular location is the nucleus. In terms of biological role, dual-function transcription factor with both repression and activation activities. Binds to 5'-CCATATT-3' motif in target gene promoters (e.g. ABR1). Also binds to G-rich DNA motif 5'-GGGGGCAGTGG-3'. Regulates the expression of genes involved in diverse cellular pathways, including glucose metabolism, photosynthesis, phototropism and stress response (e.g. salt, drought and osmotic stress). Regulates plant immunity, especially during necrotrophic fungal infection (e.g. B.cinerea). Binds to ABR1 promoter and promotes its expression, thus negatively regulating the abscisic acid (ABA) signaling pathway. Represses ABA- and salt-responsive genes expression. The sequence is that of Zinc finger transcription factor YY1 from Arabidopsis thaliana (Mouse-ear cress).